The primary structure comprises 338 residues: Ketol-acid reductoisomerase (NADP(+)) (338 aa).

The KARI N-terminal Rossmann domain occupies 1–181 (MQVYYDKDAD…GGGRAGVIET (181 aa)). Residues 24–27 (YGSQ), R47, S50, S52, and 82–85 (DEHQ) each bind NADP(+). The active site involves H107. G133 provides a ligand contact to NADP(+). The KARI C-terminal knotted domain maps to 182 to 327 (SFKDETETDL…AKLRDMMPWI (146 aa)). Mg(2+) contacts are provided by D190, E194, E226, and E230. S251 is a substrate binding site.

Belongs to the ketol-acid reductoisomerase family. Requires Mg(2+) as cofactor.

It carries out the reaction (2R)-2,3-dihydroxy-3-methylbutanoate + NADP(+) = (2S)-2-acetolactate + NADPH + H(+). The enzyme catalyses (2R,3R)-2,3-dihydroxy-3-methylpentanoate + NADP(+) = (S)-2-ethyl-2-hydroxy-3-oxobutanoate + NADPH + H(+). It participates in amino-acid biosynthesis; L-isoleucine biosynthesis; L-isoleucine from 2-oxobutanoate: step 2/4. Its pathway is amino-acid biosynthesis; L-valine biosynthesis; L-valine from pyruvate: step 2/4. In terms of biological role, involved in the biosynthesis of branched-chain amino acids (BCAA). Catalyzes an alkyl-migration followed by a ketol-acid reduction of (S)-2-acetolactate (S2AL) to yield (R)-2,3-dihydroxy-isovalerate. In the isomerase reaction, S2AL is rearranged via a Mg-dependent methyl migration to produce 3-hydroxy-3-methyl-2-ketobutyrate (HMKB). In the reductase reaction, this 2-ketoacid undergoes a metal-dependent reduction by NADPH to yield (R)-2,3-dihydroxy-isovalerate. This Thioalkalivibrio sulfidiphilus (strain HL-EbGR7) protein is Ketol-acid reductoisomerase (NADP(+)).